We begin with the raw amino-acid sequence, 66 residues long: Large ribosomal subunit protein uL29 (66 aa).

This sequence belongs to the universal ribosomal protein uL29 family.

This chain is Large ribosomal subunit protein uL29, found in Thermosipho africanus (strain TCF52B).